The chain runs to 376 residues: Erythronate-4-phosphate dehydrogenase (376 aa).

2 residues coordinate substrate: S45 and T67. D147 is a binding site for NAD(+). R209 is a catalytic residue. An NAD(+)-binding site is contributed by D233. E238 is an active-site residue. H255 serves as the catalytic Proton donor. Position 258 (G258) interacts with NAD(+). Y259 contacts substrate.

The protein belongs to the D-isomer specific 2-hydroxyacid dehydrogenase family. PdxB subfamily. As to quaternary structure, homodimer.

It is found in the cytoplasm. The catalysed reaction is 4-phospho-D-erythronate + NAD(+) = (R)-3-hydroxy-2-oxo-4-phosphooxybutanoate + NADH + H(+). Its pathway is cofactor biosynthesis; pyridoxine 5'-phosphate biosynthesis; pyridoxine 5'-phosphate from D-erythrose 4-phosphate: step 2/5. Catalyzes the oxidation of erythronate-4-phosphate to 3-hydroxy-2-oxo-4-phosphonooxybutanoate. The protein is Erythronate-4-phosphate dehydrogenase of Shewanella oneidensis (strain ATCC 700550 / JCM 31522 / CIP 106686 / LMG 19005 / NCIMB 14063 / MR-1).